The following is a 314-amino-acid chain: Ribosomal protein L11 methyltransferase (314 aa).

The S-adenosyl-L-methionine site is built by Thr166, Gly187, Asp209, and Asn251.

Belongs to the methyltransferase superfamily. PrmA family.

The protein resides in the cytoplasm. It catalyses the reaction L-lysyl-[protein] + 3 S-adenosyl-L-methionine = N(6),N(6),N(6)-trimethyl-L-lysyl-[protein] + 3 S-adenosyl-L-homocysteine + 3 H(+). In terms of biological role, methylates ribosomal protein L11. This is Ribosomal protein L11 methyltransferase from Clostridium tetani (strain Massachusetts / E88).